Here is a 656-residue protein sequence, read N- to C-terminus: Protein O1 homolog (656 aa).

Residues 544-564 form a helical membrane-spanning segment; that stretch reads FIKKVILANVIFEYIFTLIII.

This sequence belongs to the chordopoxvirinae O1 family.

Its subcellular location is the membrane. This chain is Protein O1 homolog, found in Vertebrata (FPV).